The primary structure comprises 76 residues: Conotoxin Cal5a L3 (76 aa).

The first 22 residues, 1 to 22 (MRFYIGLMAALMLTSVLRTDSA), serve as a signal peptide directing secretion. The propeptide occupies 23 to 42 (SVGQTGTKSELAVIERVIRQ). Position 50 is a 4-hydroxyproline (Pro50). 4-hydroxyproline; partial occurs at positions 58, 62, and 64.

Belongs to the conotoxin T superfamily. In terms of processing, contains 2 disulfide bonds that can be either 'C1-C3, C2-C4' or 'C1-C4, C2-C3', since these disulfide connectivities have been observed for conotoxins with cysteine framework V (for examples, see AC P0DQQ7 and AC P81755). As to expression, expressed by the venom duct.

It is found in the secreted. Functionally, probable neurotoxin with unknown target. Possibly targets ion channels. The protein is Conotoxin Cal5a L3 of Californiconus californicus (California cone).